Reading from the N-terminus, the 436-residue chain is Bifunctional protein GlmU (436 aa).

The tract at residues 1 to 225 (MNNNTSIIIL…EQNFMGINDK (225 aa)) is pyrophosphorylase. Residues 10–13 (LAAG), K24, Q76, and 83–84 (GT) contribute to the UDP-N-acetyl-alpha-D-glucosamine site. A Mg(2+)-binding site is contributed by D104. UDP-N-acetyl-alpha-D-glucosamine-binding residues include G137, E151, N166, and N223. N223 provides a ligand contact to Mg(2+). Residues 226-246 (FQLSIAEKIMQDEIKQNLMKA) form a linker region. The tract at residues 247–436 (GVLMRMPESI…KFFGKDDVKK (190 aa)) is N-acetyltransferase. UDP-N-acetyl-alpha-D-glucosamine contacts are provided by R310 and K327. Catalysis depends on H338, which acts as the Proton acceptor. Residues Y341 and N352 each coordinate UDP-N-acetyl-alpha-D-glucosamine. Residues 361 to 362 (NY), S380, A398, and R415 each bind acetyl-CoA.

It in the N-terminal section; belongs to the N-acetylglucosamine-1-phosphate uridyltransferase family. The protein in the C-terminal section; belongs to the transferase hexapeptide repeat family. In terms of assembly, homotrimer. Mg(2+) serves as cofactor.

It is found in the cytoplasm. The catalysed reaction is alpha-D-glucosamine 1-phosphate + acetyl-CoA = N-acetyl-alpha-D-glucosamine 1-phosphate + CoA + H(+). It carries out the reaction N-acetyl-alpha-D-glucosamine 1-phosphate + UTP + H(+) = UDP-N-acetyl-alpha-D-glucosamine + diphosphate. It participates in nucleotide-sugar biosynthesis; UDP-N-acetyl-alpha-D-glucosamine biosynthesis; N-acetyl-alpha-D-glucosamine 1-phosphate from alpha-D-glucosamine 6-phosphate (route II): step 2/2. The protein operates within nucleotide-sugar biosynthesis; UDP-N-acetyl-alpha-D-glucosamine biosynthesis; UDP-N-acetyl-alpha-D-glucosamine from N-acetyl-alpha-D-glucosamine 1-phosphate: step 1/1. Its pathway is bacterial outer membrane biogenesis; LPS lipid A biosynthesis. Catalyzes the last two sequential reactions in the de novo biosynthetic pathway for UDP-N-acetylglucosamine (UDP-GlcNAc). The C-terminal domain catalyzes the transfer of acetyl group from acetyl coenzyme A to glucosamine-1-phosphate (GlcN-1-P) to produce N-acetylglucosamine-1-phosphate (GlcNAc-1-P), which is converted into UDP-GlcNAc by the transfer of uridine 5-monophosphate (from uridine 5-triphosphate), a reaction catalyzed by the N-terminal domain. The chain is Bifunctional protein GlmU from Campylobacter concisus (strain 13826).